A 176-amino-acid chain; its full sequence is Inner membrane-spanning protein YciB (176 aa).

The next 5 helical transmembrane spans lie at 24 to 44, 49 to 69, 76 to 96, 119 to 139, and 149 to 169; these read TATA…AFRH, PMLW…LVLH, WKPT…QLAF, LNVV…FVAY, and FKLF…SLWL.

It belongs to the YciB family.

The protein localises to the cell inner membrane. Functionally, plays a role in cell envelope biogenesis, maintenance of cell envelope integrity and membrane homeostasis. The sequence is that of Inner membrane-spanning protein YciB from Paraburkholderia xenovorans (strain LB400).